Here is a 324-residue protein sequence, read N- to C-terminus: Calmodulin-like protein 12 (324 aa).

EF-hand domains are found at residues 8-43 (DQIT…IGEK), 44-79 (PTKA…NQGH), 97-132 (DQIT…LGKN), 133-168 (RTKA…NQGH), 187-222 (DQIL…LGET), and 223-258 (QTKA…KMID). Ca(2+) is bound by residues Asp-21, Asn-23, Asp-25, Ser-27, Glu-32, Asp-57, Asp-59, Asp-61, Thr-63, Glu-68, Asp-110, Asn-112, Asp-114, Ser-116, Glu-121, Asp-146, Asp-148, Asp-150, Thr-152, Glu-157, Asp-200, Asn-202, Asp-204, Tyr-206, Glu-211, Asp-236, Asp-238, Asp-240, Thr-242, and Glu-247.

Belongs to the calmodulin family. Interacts with PID. Binds to ABCG36.

Its function is as follows. Potential calcium sensor that binds calcium in vitro. In Arabidopsis thaliana (Mouse-ear cress), this protein is Calmodulin-like protein 12.